Reading from the N-terminus, the 653-residue chain is Macrolide export ATP-binding/permease protein MacB (653 aa).

One can recognise an ABC transporter domain in the interval 6-244; sequence IELQGVSRSY…PPLLPCSAHP (239 aa). 42–49 provides a ligand contact to ATP; sequence GSSGSGKS. The next 4 membrane-spanning stretches (helical) occupy residues 275 to 295, 525 to 545, 576 to 596, and 616 to 636; these read LLTMAGIVFGIAAVVTVVGLG, FSVLITMVAMIALFIGSLGVM, FLIEAVLVCLTGGLLGVLLAL, and WPAVSGAFLCACAIGMVFGYW.

Belongs to the ABC transporter superfamily. Macrolide exporter (TC 3.A.1.122) family. Homodimer. Part of the tripartite efflux system MacAB-TolC, which is composed of an inner membrane transporter, MacB, a periplasmic membrane fusion protein, MacA, and an outer membrane component, TolC. The complex forms a large protein conduit and can translocate molecules across both the inner and outer membranes. Interacts with MacA.

It is found in the cell inner membrane. Part of the tripartite efflux system MacAB-TolC. MacB is a non-canonical ABC transporter that contains transmembrane domains (TMD), which form a pore in the inner membrane, and an ATP-binding domain (NBD), which is responsible for energy generation. Confers resistance against macrolides. This chain is Macrolide export ATP-binding/permease protein MacB, found in Sodalis glossinidius (strain morsitans).